We begin with the raw amino-acid sequence, 175 residues long: Adenylate kinase isoenzyme 6 homolog (175 aa).

Gly-18, Gly-20, Lys-21, Thr-22, and Thr-23 together coordinate ATP. The interval Cys-38 to Val-61 is NMPbind. Residues Ser-113–Glu-123 are LID. Arg-114 contributes to the ATP binding site.

The protein belongs to the adenylate kinase family. AK6 subfamily. Interacts with small ribosomal subunit protein uS11. Not a structural component of 43S pre-ribosomes, but transiently interacts with them by binding to uS11.

The protein localises to the cytoplasm. It localises to the nucleus. The enzyme catalyses AMP + ATP = 2 ADP. The catalysed reaction is ATP + H2O = ADP + phosphate + H(+). Broad-specificity nucleoside monophosphate (NMP) kinase that catalyzes the reversible transfer of the terminal phosphate group between nucleoside triphosphates and monophosphates. Also has ATPase activity. Involved in the late cytoplasmic maturation steps of the 40S ribosomal particles, specifically 18S rRNA maturation. While NMP activity is not required for ribosome maturation, ATPase activity is. Associates transiently with small ribosomal subunit protein uS11. ATP hydrolysis breaks the interaction with uS11. May temporarily remove uS11 from the ribosome to enable a conformational change of the ribosomal RNA that is needed for the final maturation step of the small ribosomal subunit. Its NMP activity may have a role in nuclear energy homeostasis. This Schizosaccharomyces pombe (strain 972 / ATCC 24843) (Fission yeast) protein is Adenylate kinase isoenzyme 6 homolog (fap7).